The chain runs to 59 residues: Protein translocase subunit SecE (59 aa).

The helical transmembrane segment at 37 to 57 threads the bilayer; sequence GIGIIIIGVIGFIISIIAQLL.

It belongs to the SecE/SEC61-gamma family. In terms of assembly, component of the Sec protein translocase complex. Heterotrimer consisting of SecY (alpha), SecG (beta) and SecE (gamma) subunits. The heterotrimers can form oligomers, although 1 heterotrimer is thought to be able to translocate proteins. Interacts with the ribosome. May interact with SecDF, and other proteins may be involved.

It is found in the cell membrane. Essential subunit of the Sec protein translocation channel SecYEG. Clamps together the 2 halves of SecY. May contact the channel plug during translocation. The sequence is that of Protein translocase subunit SecE from Methanothermobacter thermautotrophicus (strain ATCC 29096 / DSM 1053 / JCM 10044 / NBRC 100330 / Delta H) (Methanobacterium thermoautotrophicum).